A 331-amino-acid chain; its full sequence is Sideroflexin-5 (331 aa).

4 helical membrane-spanning segments follow: residues Pro104–Trp126, Tyr153–Ile175, Thr243–Leu265, and His278–Leu300.

The protein belongs to the sideroflexin family.

It is found in the mitochondrion inner membrane. The catalysed reaction is citrate(in) = citrate(out). Its function is as follows. Mitochondrial amino-acid transporter. The protein is Sideroflexin-5 of Caenorhabditis elegans.